The chain runs to 265 residues: U6 snRNA phosphodiesterase 1 (265 aa).

Residues 1–72 (MSAAPLVGYS…DSTKHGGRVR (72 aa)) are disordered. The segment covering 20-31 (DGMRTRPGDGSH) has biased composition (basic and acidic residues). H120 functions as the Proton acceptor in the catalytic mechanism. 120–122 (HLS) contributes to the AMP binding site. UMP is bound by residues Q164, Y202, and 206–210 (SFHLS). AMP contacts are provided by residues Y202 and 204 to 210 (DPSFHLS). H208 (proton donor) is an active-site residue.

The protein belongs to the 2H phosphoesterase superfamily. USB1 family. As to quaternary structure, interacts with PLRG1, CDC5L and PRPF19.

Its subcellular location is the nucleus. The enzyme catalyses a 3'-end uridylyl-uridine-RNA = a 3'-end 2',3'-cyclophospho-uridine-RNA + uridine. It carries out the reaction a 3'-end uridylyl-adenosine-RNA = a 3'-end 2',3'-cyclophospho-uridine-RNA + adenosine. 3'-5' RNA exonuclease activity is inhibited by a 3' phosphate terminated RNA. 3'-5' RNA exonuclease that trims the 3' end of oligo(U) and oligo(A) tracts of the pre-U6 small nuclear RNA (snRNA) molecule, leading to the formation of a mature U6 snRNA 3' end-terminated with a 2',3'-cyclic phosphate. Participates in the U6 snRNA 3' end processing that prevents U6 snRNA degradation. In addition also removes uridines from the 3' end of U6atac snRNA and possibly the vault RNA VTRNA1-1. The chain is U6 snRNA phosphodiesterase 1 from Homo sapiens (Human).